The primary structure comprises 294 residues: Cell division control protein 2 homolog 2 (294 aa).

The Protein kinase domain occupies 4-287 (YEKVEKIGEG…ARGALEHEYF (284 aa)). ATP-binding positions include 10 to 18 (IGEGTYGVV) and Lys-33. Phosphothreonine is present on Thr-14. The residue at position 15 (Tyr-15) is a Phosphotyrosine. Catalysis depends on Asp-127, which acts as the Proton acceptor. The residue at position 161 (Thr-161) is a Phosphothreonine; by CAK.

It belongs to the protein kinase superfamily. CMGC Ser/Thr protein kinase family. CDC2/CDKX subfamily. In terms of tissue distribution, found in most organs including root, young leaf, stem, vegetative meristem and flower bud.

The enzyme catalyses L-seryl-[protein] + ATP = O-phospho-L-seryl-[protein] + ADP + H(+). It carries out the reaction L-threonyl-[protein] + ATP = O-phospho-L-threonyl-[protein] + ADP + H(+). Phosphorylation at Thr-14 or Tyr-15 inactivates the enzyme, while phosphorylation at Thr-161 activates it. Functionally, plays a key role in the control of the eukaryotic cell cycle. Component of the kinase complex that phosphorylates the repetitive C-terminus of RNA polymerase II. In Medicago sativa (Alfalfa), this protein is Cell division control protein 2 homolog 2 (CDC2B).